Here is an 882-residue protein sequence, read N- to C-terminus: Translation initiation factor IF-2 (882 aa).

2 disordered regions span residues 67–202 and 223–278; these read KTVS…EKAR and ERYG…KHMK. Basic and acidic residues-rich tracts occupy residues 95–152 and 161–202; these read VKRD…EAKA and EQPK…EKAR. Residues 251–264 are compositionally biased toward basic residues; the sequence is GRRNRNKTQTKSKR. Residues 265–274 are compositionally biased toward basic and acidic residues; the sequence is GGKDAREGRE. Residues 382-551 form the tr-type G domain; sequence PRAPVVTIMG…LLQAEVLELK (170 aa). The segment at 391–398 is G1; that stretch reads GHVDHGKT. GTP is bound at residue 391–398; the sequence is GHVDHGKT. Positions 416 to 420 are G2; that stretch reads GITQH. The tract at residues 437 to 440 is G3; it reads DTPG. GTP is bound by residues 437-441 and 491-494; these read DTPGH and NKMD. The G4 stretch occupies residues 491–494; it reads NKMD. The tract at residues 527–529 is G5; it reads SAK.

This sequence belongs to the TRAFAC class translation factor GTPase superfamily. Classic translation factor GTPase family. IF-2 subfamily.

The protein resides in the cytoplasm. Functionally, one of the essential components for the initiation of protein synthesis. Protects formylmethionyl-tRNA from spontaneous hydrolysis and promotes its binding to the 30S ribosomal subunits. Also involved in the hydrolysis of GTP during the formation of the 70S ribosomal complex. The polypeptide is Translation initiation factor IF-2 (Shewanella amazonensis (strain ATCC BAA-1098 / SB2B)).